A 114-amino-acid polypeptide reads, in one-letter code: uncharacterized protein (114 aa).

Glycine 2 carries the N-myristoyl glycine; by host lipid modification. The next 2 membrane-spanning stretches (helical) occupy residues 11–31 (FGLI…KDLL) and 44–64 (GLMW…LVAI). The disordered stretch occupies residues 73 to 114 (VNKDSKDPKDKSIEFDDSPIRDGSSGTPDNSNEPTDLSVETS). Over residues 75–92 (KDSKDPKDKSIEFDDSPI) the composition is skewed to basic and acidic residues. The segment covering 96 to 114 (SSGTPDNSNEPTDLSVETS) has biased composition (polar residues).

The protein resides in the membrane. This is an uncharacterized protein from Acanthamoeba polyphaga (Amoeba).